The chain runs to 335 residues: Probable cytosolic iron-sulfur protein assembly protein Ciao1 (335 aa).

WD repeat units lie at residues 12–51, 57–96, 101–140, 146–185, 192–231, 250–289, and 301–335; these read GHKG…WSTK, GHKR…FECN, GHEN…EFEC, AHTQ…SDWD, SHTS…NDAG, QHSR…KRDE, and AHEQ…KVDD.

It belongs to the WD repeat CIA1 family.

Essential component of the cytosolic iron-sulfur (Fe/S) protein assembly machinery. Required for the maturation of extramitochondrial Fe/S proteins. The chain is Probable cytosolic iron-sulfur protein assembly protein Ciao1 from Drosophila pseudoobscura pseudoobscura (Fruit fly).